The following is a 130-amino-acid chain: Large ribosomal subunit protein bL12 (130 aa).

This sequence belongs to the bacterial ribosomal protein bL12 family. As to quaternary structure, homodimer. Part of the ribosomal stalk of the 50S ribosomal subunit. Forms a multimeric L10(L12)X complex, where L10 forms an elongated spine to which 2 to 4 L12 dimers bind in a sequential fashion. Binds GTP-bound translation factors.

Forms part of the ribosomal stalk which helps the ribosome interact with GTP-bound translation factors. Is thus essential for accurate translation. The sequence is that of Large ribosomal subunit protein bL12 from Thermobifida fusca (strain YX).